Here is an 82-residue protein sequence, read N- to C-terminus: MKAYELVVYPERCHGCGNCVVSCPVNAKHPETWGGKGPYSDDVVIRVENGVVTVVNQDLCGGCGACIEACPVNAIELVFKRK.

4Fe-4S ferredoxin-type domains follow at residues 4–33 (YELVVYPERCHGCGNCVVSCPVNAKHPETW) and 51–80 (VVTVVNQDLCGGCGACIEACPVNAIELVFK). Residues Cys13, Cys16, Cys19, Cys23, Cys60, Cys63, Cys66, and Cys70 each coordinate [4Fe-4S] cluster.

[4Fe-4S] cluster is required as a cofactor.

In Methanocaldococcus jannaschii (strain ATCC 43067 / DSM 2661 / JAL-1 / JCM 10045 / NBRC 100440) (Methanococcus jannaschii), this protein is Polyferredoxin protein FwdG (fwdG).